Reading from the N-terminus, the 176-residue chain is Phosphopantetheine adenylyltransferase (176 aa).

A substrate-binding site is contributed by Thr11. ATP contacts are provided by residues 11–12 and His19; that span reads TF. Substrate is bound by residues Lys43, Leu93, and Arg107. ATP-binding positions include Glu117 and 141 to 147; that span reads LSVVSSS.

It belongs to the bacterial CoaD family. In terms of assembly, homohexamer. It depends on Mg(2+) as a cofactor.

Its subcellular location is the cytoplasm. The enzyme catalyses (R)-4'-phosphopantetheine + ATP + H(+) = 3'-dephospho-CoA + diphosphate. It functions in the pathway cofactor biosynthesis; coenzyme A biosynthesis; CoA from (R)-pantothenate: step 4/5. Functionally, reversibly transfers an adenylyl group from ATP to 4'-phosphopantetheine, yielding dephospho-CoA (dPCoA) and pyrophosphate. This Tropheryma whipplei (strain TW08/27) (Whipple's bacillus) protein is Phosphopantetheine adenylyltransferase.